The sequence spans 250 residues: tRNA-specific adenosine deaminase subunit TAD2 (250 aa).

Residues 1–119 (MQHIKHMRTA…ERFGGNGTVL (119 aa)) enclose the CMP/dCMP-type deaminase domain. His-54 is a Zn(2+) binding site. The active-site Proton donor is the Glu-56. Zn(2+) is bound by residues Cys-88 and Cys-91.

Belongs to the cytidine and deoxycytidylate deaminase family. ADAT2 subfamily. As to quaternary structure, heterodimer with TAD3. Zn(2+) serves as cofactor.

The protein resides in the cytoplasm. The protein localises to the nucleus. It carries out the reaction adenosine(34) in tRNA + H2O + H(+) = inosine(34) in tRNA + NH4(+). Its function is as follows. Structural subunit of tRNA-specific adenosine deaminase, which deaminates adenosine-34 (the first, also called wobble position of the anticodon) to inosine in many tRNAs. Inosine-34 allows the decoding of 3 different nucleotides at the third position of mRNA codons, as inosine is able to pair with U, C, and A. The protein is tRNA-specific adenosine deaminase subunit TAD2 (TAD2) of Saccharomyces cerevisiae (strain ATCC 204508 / S288c) (Baker's yeast).